Consider the following 338-residue polypeptide: tRNA (cytosine(34)-C(5))-methyltransferase, mitochondrial (338 aa).

Residues 140–146, Glu-163, Asp-194, and Asp-212 each bind S-adenosyl-L-methionine; that span reads CAAPGGK. The active-site Nucleophile is the Cys-266.

It belongs to the class I-like SAM-binding methyltransferase superfamily. RsmB/NOP family.

Its subcellular location is the mitochondrion matrix. The catalysed reaction is cytidine(34) in mitochondrial tRNA + S-adenosyl-L-methionine = 5-methylcytidine(34) in mitochondrial tRNA + S-adenosyl-L-homocysteine + H(+). In terms of biological role, mitochondrial tRNA methyltransferase that mediates methylation of cytosine to 5-methylcytosine (m5C) at position 34 of mt-tRNA(Met). mt-tRNA(Met) methylation at cytosine(34) takes place at the wobble position of the anticodon and initiates the formation of 5-formylcytosine (f(5)c) at this position. mt-tRNA(Met) containing the f(5)c modification at the wobble position enables recognition of the AUA codon in addition to the AUG codon, expanding codon recognition in mitochondrial translation. In Bos taurus (Bovine), this protein is tRNA (cytosine(34)-C(5))-methyltransferase, mitochondrial.